The sequence spans 417 residues: 4-hydroxy-3-methylbut-2-en-1-yl diphosphate synthase (flavodoxin) (417 aa).

[4Fe-4S] cluster is bound by residues cysteine 305, cysteine 308, cysteine 351, and glutamate 358.

Belongs to the IspG family. [4Fe-4S] cluster is required as a cofactor.

The enzyme catalyses (2E)-4-hydroxy-3-methylbut-2-enyl diphosphate + oxidized [flavodoxin] + H2O + 2 H(+) = 2-C-methyl-D-erythritol 2,4-cyclic diphosphate + reduced [flavodoxin]. It functions in the pathway isoprenoid biosynthesis; isopentenyl diphosphate biosynthesis via DXP pathway; isopentenyl diphosphate from 1-deoxy-D-xylulose 5-phosphate: step 5/6. Its function is as follows. Converts 2C-methyl-D-erythritol 2,4-cyclodiphosphate (ME-2,4cPP) into 1-hydroxy-2-methyl-2-(E)-butenyl 4-diphosphate. The polypeptide is 4-hydroxy-3-methylbut-2-en-1-yl diphosphate synthase (flavodoxin) (Nitrosomonas europaea (strain ATCC 19718 / CIP 103999 / KCTC 2705 / NBRC 14298)).